The following is a 921-amino-acid chain: Respiratory burst oxidase homolog protein D (921 aa).

Residues 1–71 (MKMRRGNSSN…RSNSVAGGRG (71 aa)) form a disordered region. Residues 1–376 (MKMRRGNSSN…KYFILDNWQR (376 aa)) lie on the Cytoplasmic side of the membrane. 4 positions are modified to phosphoserine: Ser-8, Ser-9, Ser-26, and Ser-39. Polar residues predominate over residues 21–31 (NSDTNSDTESI). Basic residues predominate over residues 44–53 (RPKRASKKNA). EF-hand-like regions lie at residues 193–203 (SADSNGLLLSA) and 230–241 (NNVSGDAITKEQ). 2 consecutive EF-hand domains span residues 253-288 (SFDAKLQVFFDMVDKDEDGRVTEEEVAEIISLSASA) and 297-332 (QAKEYAALIMEELDPDNAGFIMIENLEMLLLQAPNQ). Asp-266, Asp-268, Asp-270, Arg-272, and Glu-277 together coordinate Ca(2+). Ser-339, Ser-343, and Ser-347 each carry phosphoserine. A helical membrane pass occupies residues 377–397 (LWIMMLWLGICGGLFTYKFIQ). The Extracellular portion of the chain corresponds to 398 to 461 (YKNKAAYGVM…FDDSLNFHKV (64 aa)). Residues 415–572 (KGGAETLKFN…LFIIVYALLI (158 aa)) form the Ferric oxidoreductase domain. Residues 462 to 482 (IASGIVVGVLLHAGAHLTCDF) form a helical membrane-spanning segment. Topologically, residues 483-516 (PRLIAADEDTYEPMEKYFGDQPTSYWWFVKGVEG) are cytoplasmic. The helical transmembrane segment at 517–537 (WTGIVMVVLMAIAFTLATPWF) threads the bilayer. Over 538–559 (RRNKLNLPNFLKKLTGFNAFWY) the chain is Extracellular. Residues 560–580 (THHLFIIVYALLIVHGIKLYL) form a helical membrane-spanning segment. The Cytoplasmic portion of the chain corresponds to 581-588 (TKIWYQKT). A helical transmembrane segment spans residues 589–606 (TWMYLAVPILLYASERLL). Over 607 to 734 (RAFRSSIKPV…PYGAPAQDYK (128 aa)) the chain is Extracellular. Positions 611 to 732 (SSIKPVKMIK…DGPYGAPAQD (122 aa)) constitute an FAD-binding FR-type domain. Residues 735–755 (KYDVVLLVGLGIGATPMISIL) form a helical membrane-spanning segment. The Cytoplasmic portion of the chain corresponds to 756-921 (KDIINNMKGP…TKFDFHKENF (166 aa)).

It belongs to the RBOH (TC 5.B.1.3) family. In terms of assembly, monomer and homodimer. Interacts with BIK1 and FLS2. Interacts with PBL13. Binds to SIK1 upon flagellin perception and becomes activated by phosphorylation. Phosphorylated at Ser-39, Ser-343 and Ser-347 by BIK1 upon flagellin (flg22) treatment. Activated by phosphorylation at Ser-347 mediated by SIK1 and at Ser-8, Ser-9 and Ser-339 upon flagellin (e.g. flg22) perception. As to expression, more abundant in roots than in leaves, stems or inflorescences. Expressed in mesophyll and guard cells.

The protein localises to the membrane. With respect to regulation, inhibited by diphenylene iodinium (DPI). Its function is as follows. Calcium-dependent NADPH oxidase that generates superoxide. Involved in the generation of reactive oxygen species (ROS) during incompatible interactions with pathogens, in response to pathogen-associated molecular pattern (PAMP)-triggered immunity (PTI) signaling and in UV-B and abscisic acid ROS-dependent signaling and via SIK1 mediated activation by phosphorylation. Might be required for ROS signal amplification during light stress. The polypeptide is Respiratory burst oxidase homolog protein D (Arabidopsis thaliana (Mouse-ear cress)).